The sequence spans 1818 residues: U3 small nucleolar RNA-associated protein 10 (1818 aa).

Residues Thr-568–Ile-588 form a helical membrane-spanning segment. One copy of the HEAT repeat lies at Leu-1778 to Tyr-1816.

The protein belongs to the HEATR1/UTP10 family. Component of the ribosomal small subunit (SSU) processome.

It localises to the nucleus. Its subcellular location is the nucleolus. The protein localises to the membrane. Its function is as follows. Involved in nucleolar processing of pre-18S ribosomal RNA. Involved in ribosome biosynthesis. The chain is U3 small nucleolar RNA-associated protein 10 from Candida albicans (strain SC5314 / ATCC MYA-2876) (Yeast).